Here is a 420-residue protein sequence, read N- to C-terminus: Gamma-glutamyl phosphate reductase (420 aa).

Belongs to the gamma-glutamyl phosphate reductase family.

It is found in the cytoplasm. It catalyses the reaction L-glutamate 5-semialdehyde + phosphate + NADP(+) = L-glutamyl 5-phosphate + NADPH + H(+). The protein operates within amino-acid biosynthesis; L-proline biosynthesis; L-glutamate 5-semialdehyde from L-glutamate: step 2/2. Functionally, catalyzes the NADPH-dependent reduction of L-glutamate 5-phosphate into L-glutamate 5-semialdehyde and phosphate. The product spontaneously undergoes cyclization to form 1-pyrroline-5-carboxylate. In Neisseria gonorrhoeae (strain ATCC 700825 / FA 1090), this protein is Gamma-glutamyl phosphate reductase.